The chain runs to 431 residues: Saglin (431 aa).

The first 39 residues, 1–39 (MSVRDYSGVQVISSRKHRSMSRLPTVLLLLASAAVLAAG), serve as a signal peptide directing secretion. Residue Asn-95 is glycosylated (N-linked (GlcNAc...) asparagine). A coiled-coil region spans residues 120–169 (LDDAQRQMEQEHRQYAATLEEQLHAAQQETQQEQEMKKALQKQLDALTDS).

As to quaternary structure, homodimer. As to expression, female salivary gland (at protein level). Not detected in female carcass without salivary glands, midgut and hemolymph (at protein level). Probably not expressed in male tissues.

It is found in the secreted. In terms of biological role, (Microbial infection) Facilitates efficient midgut colonization by Plasmodium berghei parasites. Promotes successful transmission of Plasmodium berghei at low infection densities. (Microbial infection) Facilitates efficient midgut colonization by Plasmodium falciparum. This chain is Saglin, found in Anopheles coluzzii (African malaria mosquito).